A 292-amino-acid chain; its full sequence is Protein LRATD1 (292 aa).

Residue S38 is modified to Phosphoserine. The LRAT domain occupies P133 to A228.

This sequence belongs to the LRATD family. As to expression, only detected in testis. Highly expressed in colon cancer cells.

The protein resides in the cytoplasm. Its function is as follows. May play a role in cell morphology and motility. The chain is Protein LRATD1 from Homo sapiens (Human).